The chain runs to 456 residues: Enolase (456 aa).

Position 164 (Gln164) interacts with (2R)-2-phosphoglycerate. Catalysis depends on Glu207, which acts as the Proton donor. Asp244, Glu287, and Asp314 together coordinate Mg(2+). Positions 339, 368, 369, and 390 each coordinate (2R)-2-phosphoglycerate. Lys339 (proton acceptor) is an active-site residue.

This sequence belongs to the enolase family. In terms of assembly, component of the RNA degradosome, a multiprotein complex involved in RNA processing and mRNA degradation. Requires Mg(2+) as cofactor.

Its subcellular location is the cytoplasm. The protein resides in the secreted. It localises to the cell surface. The catalysed reaction is (2R)-2-phosphoglycerate = phosphoenolpyruvate + H2O. It participates in carbohydrate degradation; glycolysis; pyruvate from D-glyceraldehyde 3-phosphate: step 4/5. Its function is as follows. Catalyzes the reversible conversion of 2-phosphoglycerate (2-PG) into phosphoenolpyruvate (PEP). It is essential for the degradation of carbohydrates via glycolysis. In Francisella tularensis subsp. tularensis (strain FSC 198), this protein is Enolase.